Reading from the N-terminus, the 361-residue chain is 1D-myo-inositol 2-acetamido-2-deoxy-alpha-D-glucopyranoside deacetylase (361 aa).

Over residues 1–12 (MTTTPQPPPQPD) the composition is skewed to pro residues. The tract at residues 1-27 (MTTTPQPPPQPDETPEGAAGAATAGRD) is disordered. Positions 16 to 25 (EGAAGAATAG) are enriched in low complexity. Zn(2+)-binding residues include H66, D69, and H207.

This sequence belongs to the MshB deacetylase family. It depends on Zn(2+) as a cofactor.

The catalysed reaction is 1D-myo-inositol 2-acetamido-2-deoxy-alpha-D-glucopyranoside + H2O = 1D-myo-inositol 2-amino-2-deoxy-alpha-D-glucopyranoside + acetate. In terms of biological role, catalyzes the deacetylation of 1D-myo-inositol 2-acetamido-2-deoxy-alpha-D-glucopyranoside (GlcNAc-Ins) in the mycothiol biosynthesis pathway. The sequence is that of 1D-myo-inositol 2-acetamido-2-deoxy-alpha-D-glucopyranoside deacetylase from Kineococcus radiotolerans (strain ATCC BAA-149 / DSM 14245 / SRS30216).